Reading from the N-terminus, the 284-residue chain is GPN-loop GTPase 3 (284 aa).

Gly13 to Thr18 is a binding site for GTP. Positions Gly72–Asn74 match the Gly-Pro-Asn (GPN)-loop; involved in dimer interface motif. Thr174–Asp177 contacts GTP.

This sequence belongs to the GPN-loop GTPase family. Heterodimer with GPN1. Binds to RNA polymerase II (RNAPII). Interacts directly with subunits RPB4 and RPB7 and the CTD of RPB1.

Functionally, small GTPase required for proper localization of RNA polymerase II (RNAPII). May act at an RNAP assembly step prior to nuclear import. This chain is GPN-loop GTPase 3, found in Homo sapiens (Human).